A 92-amino-acid chain; its full sequence is Small ribosomal subunit protein uS19 (92 aa).

The protein belongs to the universal ribosomal protein uS19 family.

Protein S19 forms a complex with S13 that binds strongly to the 16S ribosomal RNA. This chain is Small ribosomal subunit protein uS19, found in Streptococcus pyogenes serotype M49 (strain NZ131).